The chain runs to 77 residues: Acyl carrier protein (77 aa).

The Carrier domain maps to 2 to 77 (STVEERVKKI…DAIDYIVAHT (76 aa)). Ser37 carries the O-(pantetheine 4'-phosphoryl)serine modification.

The protein belongs to the acyl carrier protein (ACP) family. In terms of processing, 4'-phosphopantetheine is transferred from CoA to a specific serine of apo-ACP by AcpS. This modification is essential for activity because fatty acids are bound in thioester linkage to the sulfhydryl of the prosthetic group.

It is found in the cytoplasm. It participates in lipid metabolism; fatty acid biosynthesis. In terms of biological role, carrier of the growing fatty acid chain in fatty acid biosynthesis. The chain is Acyl carrier protein from Marinobacter nauticus (strain ATCC 700491 / DSM 11845 / VT8) (Marinobacter aquaeolei).